Here is a 358-residue protein sequence, read N- to C-terminus: MESKAFNKPKVELHVHLDGSIKPETIIHFAKKRQIKLPADTVEGLLEHVSYKEPLSLTEFLSKFNHYMPAIAGDREAIKRIAYEFVEMKAKEGVIYVEVRYSPHFLANSKVEPIPWGQKEGDITPDEVVDLVNQGLRKGEKAFNIKARSILCCMRHMPSWSTEVVELCKKYQNDTVVAIDLAGDESLNCESYPGHRKAYEEAVKCGIHRTVHAGEVGPSSVVKEAVEVLKAERIGHGYHTTEDPNLYKELLEKNMHFEVCPWSSYLTGACHPDFTKHPATQFRKDKANYSLNTDDPLIFGSTLDVDYSIAAKHMGFTEEEFKRVNINAAKSSFLPESEKKELLYKLYEAYGMILSTGL.

His14 and His16 together coordinate Zn(2+). His16, Asp18, and Gly183 together coordinate substrate. Zn(2+) is bound at residue His212. Glu215 functions as the Proton donor in the catalytic mechanism. Asp294 provides a ligand contact to Zn(2+). Substrate is bound at residue Asp295.

The protein belongs to the metallo-dependent hydrolases superfamily. Adenosine and AMP deaminases family. Zn(2+) is required as a cofactor.

The protein localises to the cell membrane. Its subcellular location is the cell junction. The protein resides in the cytoplasmic vesicle lumen. It localises to the cytoplasm. It is found in the lysosome. The enzyme catalyses adenosine + H2O + H(+) = inosine + NH4(+). It carries out the reaction 2'-deoxyadenosine + H2O + H(+) = 2'-deoxyinosine + NH4(+). Its function is as follows. Catalyzes the hydrolytic deamination of adenosine and 2-deoxyadenosine. Plays an important role in purine metabolism and in adenosine homeostasis. Modulates signaling by extracellular adenosine, and so contributes indirectly to cellular signaling events. May act as a positive regulator of T-cell coactivation. The chain is Adenosine deaminase (ada) from Xenopus tropicalis (Western clawed frog).